Here is a 497-residue protein sequence, read N- to C-terminus: Iron-sulfur cluster assembly factor IBA57, mitochondrial (497 aa).

The N-terminal 27 residues, 1-27 (MFISRRCRIKGFTLKNLLWFRSSSTRF), are a transit peptide targeting the mitochondrion. Residues 414-433 (PTLNPFTNKPPERTKRKQRP) form a disordered region.

The protein belongs to the GcvT family. CAF17/IBA57 subfamily. In terms of assembly, interacts with CCR4, ISA1 and ISA2.

Its subcellular location is the mitochondrion matrix. In terms of biological role, required for lysine and glutamate prototrophy and mitochondrial genome maintenance. Has a role in the maturation of mitochondrial aconitase-type and radical-SAM Fe/S proteins biotin synthase and lipoic acid synthase. The chain is Iron-sulfur cluster assembly factor IBA57, mitochondrial from Saccharomyces cerevisiae (strain ATCC 204508 / S288c) (Baker's yeast).